The primary structure comprises 295 residues: Aspartate carbamoyltransferase catalytic subunit (295 aa).

Residues Arg-49 and Thr-50 each coordinate carbamoyl phosphate. Lys-77 contacts L-aspartate. Positions 99, 127, and 130 each coordinate carbamoyl phosphate. Positions 161 and 212 each coordinate L-aspartate. Carbamoyl phosphate-binding residues include Gly-251 and Pro-252.

This sequence belongs to the aspartate/ornithine carbamoyltransferase superfamily. ATCase family. Heterododecamer (2C3:3R2) of six catalytic PyrB chains organized as two trimers (C3), and six regulatory PyrI chains organized as three dimers (R2).

It carries out the reaction carbamoyl phosphate + L-aspartate = N-carbamoyl-L-aspartate + phosphate + H(+). It participates in pyrimidine metabolism; UMP biosynthesis via de novo pathway; (S)-dihydroorotate from bicarbonate: step 2/3. Catalyzes the condensation of carbamoyl phosphate and aspartate to form carbamoyl aspartate and inorganic phosphate, the committed step in the de novo pyrimidine nucleotide biosynthesis pathway. The protein is Aspartate carbamoyltransferase catalytic subunit of Campylobacter jejuni subsp. doylei (strain ATCC BAA-1458 / RM4099 / 269.97).